Reading from the N-terminus, the 260-residue chain is Pyridoxine 5'-phosphate synthase (260 aa).

Asn-15 is a 3-amino-2-oxopropyl phosphate binding site. A 1-deoxy-D-xylulose 5-phosphate-binding site is contributed by 17-18 (DH). 3-amino-2-oxopropyl phosphate is bound at residue Arg-26. His-51 serves as the catalytic Proton acceptor. 1-deoxy-D-xylulose 5-phosphate is bound by residues Arg-53 and His-58. The active-site Proton acceptor is Glu-78. Thr-108 lines the 1-deoxy-D-xylulose 5-phosphate pocket. His-199 functions as the Proton donor in the catalytic mechanism. Residues Gly-200 and 221 to 222 (GH) contribute to the 3-amino-2-oxopropyl phosphate site.

This sequence belongs to the PNP synthase family. Homooctamer; tetramer of dimers.

It localises to the cytoplasm. It catalyses the reaction 3-amino-2-oxopropyl phosphate + 1-deoxy-D-xylulose 5-phosphate = pyridoxine 5'-phosphate + phosphate + 2 H2O + H(+). Its pathway is cofactor biosynthesis; pyridoxine 5'-phosphate biosynthesis; pyridoxine 5'-phosphate from D-erythrose 4-phosphate: step 5/5. Catalyzes the complicated ring closure reaction between the two acyclic compounds 1-deoxy-D-xylulose-5-phosphate (DXP) and 3-amino-2-oxopropyl phosphate (1-amino-acetone-3-phosphate or AAP) to form pyridoxine 5'-phosphate (PNP) and inorganic phosphate. The sequence is that of Pyridoxine 5'-phosphate synthase from Cupriavidus pinatubonensis (strain JMP 134 / LMG 1197) (Cupriavidus necator (strain JMP 134)).